The primary structure comprises 197 residues: Large ribosomal subunit protein uL5 (197 aa).

This sequence belongs to the universal ribosomal protein uL5 family. In terms of assembly, part of the 50S ribosomal subunit; contacts the 5S rRNA and probably tRNA. Forms a bridge to the 30S subunit in the 70S ribosome.

Functionally, this is one of the proteins that bind and probably mediate the attachment of the 5S RNA into the large ribosomal subunit, where it forms part of the central protuberance. In the 70S ribosome it contacts protein S13 of the 30S subunit (bridge B1b), connecting the 2 subunits; this bridge is implicated in subunit movement. May contact the P site tRNA; the 5S rRNA and some of its associated proteins might help stabilize positioning of ribosome-bound tRNAs. The sequence is that of Large ribosomal subunit protein uL5 from Caldivirga maquilingensis (strain ATCC 700844 / DSM 13496 / JCM 10307 / IC-167).